Consider the following 557-residue polypeptide: MVTEWIQLLIFLFALLIFSPLFGLGLYKVYLYKTSGFEKFLYKICGIDPNRNMDWKEYALSLLVFNFFGFLLLFLILFFQNYLPLNPENFPGLVWDLAFNTAVSFTTNTNWQAYSGESTLSFFSQMAGLTTQNFLSATTGLCVLLALSRGISVNYNVFALGNFWKDMIRGTLYVLLPLSFIFALFLVGFGVVQTFSESVSAITLEGNTQIIPLGPVASQVAIKQLGTNGGGYFGVNASHPFENPSPISNFLQMFSILILPGACVFLYGRITGSIRHAWAIFSVMFTILCVGILIVWTFESSWNPISGTLGFWEGKEIRFGILNSSIWEVATTVASNGSVNSMHDSFSPIGGLVGILNIQLGEIVFGGVGAGMYGMILFVLLTVFLSGIMVGRSPEYLGKKIEKREIQMSILGILLPSTIILLFTAISVSVSDALSSLTNRGPHGLSEILYAFSSGAGNNGSAFAGLNANTTYYNVMIAIAMILGRFGVILPVLVIAGSLAQKKRSEIVSEGSFSTEGGTFYILLLSVIIIVGALTFFPVLTIGPILEHFIMFQNLTF.

10 consecutive transmembrane segments (helical) span residues 6-26 (IQLLIFLFALLIFSPLFGLGL), 59-79 (ALSLLVFNFFGFLLLFLILFF), 127-147 (AGLTTQNFLSATTGLCVLLAL), 172-192 (LYVLLPLSFIFALFLVGFGVV), 247-267 (ISNFLQMFSILILPGACVFLY), 278-298 (WAIFSVMFTILCVGILIVWTF), 363-383 (IVFGGVGAGMYGMILFVLLTV), 410-430 (ILGILLPSTIILLFTAISVSV), 475-495 (VMIAIAMILGRFGVILPVLVI), and 520-540 (FYILLLSVIIIVGALTFFPVL).

The protein belongs to the KdpA family. The system is composed of three essential subunits: KdpA, KdpB and KdpC.

Its subcellular location is the cell inner membrane. Functionally, part of the high-affinity ATP-driven potassium transport (or Kdp) system, which catalyzes the hydrolysis of ATP coupled with the electrogenic transport of potassium into the cytoplasm. This subunit binds the periplasmic potassium ions and delivers the ions to the membrane domain of KdpB through an intramembrane tunnel. This Leptospira interrogans serogroup Icterohaemorrhagiae serovar copenhageni (strain Fiocruz L1-130) protein is Potassium-transporting ATPase potassium-binding subunit.